Here is a 391-residue protein sequence, read N- to C-terminus: Arginine biosynthesis bifunctional protein ArgJ (391 aa).

Substrate contacts are provided by Thr-149, Lys-172, Thr-183, Glu-263, Asn-386, and Ser-391. The active-site Nucleophile is the Thr-183.

The protein belongs to the ArgJ family. Heterotetramer of two alpha and two beta chains.

It is found in the cytoplasm. It catalyses the reaction N(2)-acetyl-L-ornithine + L-glutamate = N-acetyl-L-glutamate + L-ornithine. It carries out the reaction L-glutamate + acetyl-CoA = N-acetyl-L-glutamate + CoA + H(+). It participates in amino-acid biosynthesis; L-arginine biosynthesis; L-ornithine and N-acetyl-L-glutamate from L-glutamate and N(2)-acetyl-L-ornithine (cyclic): step 1/1. It functions in the pathway amino-acid biosynthesis; L-arginine biosynthesis; N(2)-acetyl-L-ornithine from L-glutamate: step 1/4. Catalyzes two activities which are involved in the cyclic version of arginine biosynthesis: the synthesis of N-acetylglutamate from glutamate and acetyl-CoA as the acetyl donor, and of ornithine by transacetylation between N(2)-acetylornithine and glutamate. This Bifidobacterium longum (strain NCC 2705) protein is Arginine biosynthesis bifunctional protein ArgJ.